The sequence spans 404 residues: MKLPIYFDYSATTPVDKRVAEKMMQYMTNDGHFGNPASRSHKFGWQAEEAVDIARNQIAELINADPREIVFTSGATESNNLAIKGAANFYNKKGKHIITCKTEHKAVLDTCRELERQGFEVTYLDPEENGLIDLNKLNDAMRDDTILVSIMQVNNEIGVIQDISEIGEMCRARKIVFHVDAAQSAGKINIDMQALKVDLMSISAHKMYGPKGIGALYVSRKPRIRLEAQTHGGGHERGMRSGTLATHQIVGMGEACRLAKEEMAQDQAHVTAMRDRLWAGLNSMEQVFINGDADKRYPGNLNVSFNFVEGESLIMALKDLAVSSGSACTSASLEPSYVLRALGLNDEMAHSSIRFSFGRFTTTEEIDYAIELIKGAIGHLRDMSPLWEMFKDGIDLDSIEWAAH.

Pyridoxal 5'-phosphate is bound by residues alanine 75 to threonine 76, asparagine 155, glutamine 183, and serine 203 to histidine 205. Lysine 206 is modified (N6-(pyridoxal phosphate)lysine). Threonine 243 serves as a coordination point for pyridoxal 5'-phosphate. The Cysteine persulfide intermediate role is filled by cysteine 328. Cysteine 328 is a binding site for [2Fe-2S] cluster.

The protein belongs to the class-V pyridoxal-phosphate-dependent aminotransferase family. NifS/IscS subfamily. As to quaternary structure, homodimer. Forms a heterotetramer with IscU, interacts with other sulfur acceptors. The cofactor is pyridoxal 5'-phosphate.

Its subcellular location is the cytoplasm. It carries out the reaction (sulfur carrier)-H + L-cysteine = (sulfur carrier)-SH + L-alanine. It participates in cofactor biosynthesis; iron-sulfur cluster biosynthesis. Its function is as follows. Master enzyme that delivers sulfur to a number of partners involved in Fe-S cluster assembly, tRNA modification or cofactor biosynthesis. Catalyzes the removal of elemental sulfur atoms from cysteine to produce alanine. Functions as a sulfur delivery protein for Fe-S cluster synthesis onto IscU, an Fe-S scaffold assembly protein, as well as other S acceptor proteins. The polypeptide is Cysteine desulfurase IscS (Colwellia psychrerythraea (strain 34H / ATCC BAA-681) (Vibrio psychroerythus)).